The sequence spans 420 residues: Pyridinium-3,5-bisthiocarboxylic acid mononucleotide nickel insertion protein (420 aa).

The protein belongs to the LarC family.

The catalysed reaction is Ni(II)-pyridinium-3,5-bisthiocarboxylate mononucleotide = pyridinium-3,5-bisthiocarboxylate mononucleotide + Ni(2+). Functionally, involved in the biosynthesis of a nickel-pincer cofactor ((SCS)Ni(II) pincer complex). Binds Ni(2+), and functions in nickel delivery to pyridinium-3,5-bisthiocarboxylic acid mononucleotide (P2TMN), to form the mature cofactor. Is required for the activation of the lactate racemase LarA. May also be involved in the activation of other nickel-pincer cofactor-dependent enzymes. In Lactiplantibacillus plantarum (strain ATCC BAA-793 / NCIMB 8826 / WCFS1) (Lactobacillus plantarum), this protein is Pyridinium-3,5-bisthiocarboxylic acid mononucleotide nickel insertion protein.